The following is a 148-amino-acid chain: uncharacterized protein (148 aa).

The ABC transmembrane type-1 domain occupies 25 to 148 (LSIGLIFSLI…YSITNIFIYN (124 aa)). 3 helical membrane-spanning segments follow: residues 26-46 (SIGL…PLII), 60-80 (IVII…STYI), and 127-147 (ITRV…IFIY).

The protein localises to the cell membrane. This is an uncharacterized protein from Staphylococcus epidermidis.